The chain runs to 254 residues: NAD kinase (254 aa).

Catalysis depends on D44, which acts as the Proton acceptor. Residues 44-45, 114-115, D144, A152, 155-160, and A179 contribute to the NAD(+) site; these read DG, NE, and TAYNYS.

It belongs to the NAD kinase family. It depends on a divalent metal cation as a cofactor.

Its subcellular location is the cytoplasm. It catalyses the reaction NAD(+) + ATP = ADP + NADP(+) + H(+). Involved in the regulation of the intracellular balance of NAD and NADP, and is a key enzyme in the biosynthesis of NADP. Catalyzes specifically the phosphorylation on 2'-hydroxyl of the adenosine moiety of NAD to yield NADP. The chain is NAD kinase from Cereibacter sphaeroides (strain ATCC 17029 / ATH 2.4.9) (Rhodobacter sphaeroides).